A 147-amino-acid polypeptide reads, in one-letter code: Hemoglobin subunit gamma (147 aa).

The 145-residue stretch at 3–147 (YFTAEEKAAI…VASALARKYH (145 aa)) folds into the Globin domain. Heme b contacts are provided by H64 and H93.

Belongs to the globin family. As to quaternary structure, heterotetramer of two alpha chains and two gamma chains in fetal hemoglobin (Hb F). Red blood cells.

Its function is as follows. Gamma chains make up the fetal hemoglobin F, in combination with alpha chains. This is Hemoglobin subunit gamma (HBG) from Dugong dugon (Dugong).